The following is a 481-amino-acid chain: ATP synthase subunit alpha (481 aa).

Position 145-152 (145-152 (GDRQTGKT)) interacts with ATP.

This sequence belongs to the ATPase alpha/beta chains family. In terms of assembly, F-type ATPases have 2 components, CF(1) - the catalytic core - and CF(0) - the membrane proton channel. CF(1) has five subunits: alpha(3), beta(3), gamma(1), delta(1), epsilon(1). CF(0) has three main subunits: a(1), b(2) and c(9-12). The alpha and beta chains form an alternating ring which encloses part of the gamma chain. CF(1) is attached to CF(0) by a central stalk formed by the gamma and epsilon chains, while a peripheral stalk is formed by the delta and b chains.

The protein resides in the cell membrane. It catalyses the reaction ATP + H2O + 4 H(+)(in) = ADP + phosphate + 5 H(+)(out). In terms of biological role, produces ATP from ADP in the presence of a proton gradient across the membrane. The alpha chain is a regulatory subunit. The chain is ATP synthase subunit alpha from Carsonella ruddii (strain PV).